The chain runs to 1252 residues: Nephrin (1252 aa).

An N-terminal signal peptide occupies residues 1–35 (MGAKRVTVRGARTSPIHRMSSLTPLLLMGMLTSGL). The Extracellular segment spans residues 36–1078 (AESPVPTSAP…PGPPRLPLLP (1043 aa)). Ig-like C2-type domains lie at 39 to 144 (PVPT…VILS), 149 to 247 (PKVL…ASFT), 256 to 347 (PPVI…RSIT), 354 to 448 (PSAI…KSLT), 454 to 554 (PAQK…TQLV), and 558 to 649 (PPTN…ETVS). Asn-54 is a glycosylation site (N-linked (GlcNAc...) asparagine). Cystine bridges form between Cys-67–Cys-125, Cys-174–Cys-231, and Cys-279–Cys-331. N-linked (GlcNAc...) asparagine glycosylation occurs at Asn-370. A disulfide bond links Cys-375 and Cys-431. Ser-446 carries the post-translational modification Phosphoserine. Cys-479 and Cys-542 form a disulfide bridge. Residues Asn-561, Asn-578, Asn-591, and Asn-722 are each glycosylated (N-linked (GlcNAc...) asparagine). Cys-581 and Cys-637 form a disulfide bridge. 2 Ig-like C2-type domains span residues 754–846 (PTIR…LVRL) and 852–953 (PQVD…VSIS). Cystine bridges form between Cys-775–Cys-830 and Cys-877–Cys-934. The Fibronectin type-III domain occupies 957–1052 (PPLGLKVVSI…IQVSVTTPGP (96 aa)). The tract at residues 1043-1067 (IQVSVTTPGPDQAPEDTDHQLPTEL) is disordered. A helical transmembrane segment spans residues 1079-1099 (VLFAVGGLLLLSNASCVGGLL). The Cytoplasmic portion of the chain corresponds to 1100–1252 (WRRRLRRLAE…LPFELRGHLV (153 aa)). Residue Ser-1112 is modified to Phosphoserine. A compositionally biased stretch (basic and acidic residues) spans 1113-1127 (EKTEAGSEDRIRNEY). A disordered region spans residues 1113-1144 (EKTEAGSEDRIRNEYEESQWTGDRDTRSSTVS). The residue at position 1115 (Thr-1115) is a Phosphothreonine. Ser-1119 carries the phosphoserine modification. Tyr-1204 carries the phosphotyrosine; by FYN modification.

The protein belongs to the immunoglobulin superfamily. As to quaternary structure, interacts with NPHS2 and with CD2AP (via C-terminal domain). Self-associates (via the Ig-like domains). Also interacts (via the Ig-like domains) with KIRREL1/NEPH1 and KIRREL2; the interaction with KIRREL1 is dependent on KIRREL1 glycosylation. Interacts with KIRREL3. Interacts with MAGI1 (via PDZ 2 and 3 domains) forming a tripartite complex with IGSF5/JAM4. Interacts with DDN; the interaction is direct. Forms a complex with ACTN4, CASK, IQGAP1, MAGI2, SPTAN1 and SPTBN1. Interacts with phosphatidylinositol 3-kinase regulatory subunit PIK3R1; the interaction is reduced by high glucose levels. Post-translationally, phosphorylated at Tyr-1204 by FYN, leading to the recruitment and activation of phospholipase C-gamma-1/PLCG1. Tyrosine phosphorylation is reduced by high glucose levels. Dephosphorylated by tensin TNS2 which leads to reduced binding of NPHN1 to PIK3R1. In terms of tissue distribution, strongly expressed in the podocytes of kidney glomeruli (at protein level) and at lower levels in the spleen.

Its subcellular location is the cell membrane. Its function is as follows. Seems to play a role in the development or function of the kidney glomerular filtration barrier. Regulates glomerular vascular permeability. May anchor the podocyte slit diaphragm to the actin cytoskeleton. Plays a role in skeletal muscle formation through regulation of myoblast fusion. In Rattus norvegicus (Rat), this protein is Nephrin (Nphs1).